The primary structure comprises 116 residues: Non-specific lipid-transfer protein 5 (116 aa).

The N-terminal stretch at 1–24 (MARSMKLACVVLVMCMIVAPMAEG) is a signal peptide. Disulfide bonds link Cys-28–Cys-75, Cys-38–Cys-52, Cys-53–Cys-98, and Cys-73–Cys-112.

Belongs to the plant LTP family.

In terms of biological role, plant non-specific lipid-transfer proteins transfer phospholipids as well as galactolipids across membranes. May play a role in wax or cutin deposition in the cell walls of expanding epidermal cells and certain secretory tissues. The chain is Non-specific lipid-transfer protein 5 from Lens culinaris (Lentil).